The following is a 319-amino-acid chain: Lipoyl synthase (319 aa).

The segment at L5 to K31 is disordered. [4Fe-4S] cluster is bound by residues C61, C66, C72, C87, C91, C94, and S300. The Radical SAM core domain occupies W73–L289.

Belongs to the radical SAM superfamily. Lipoyl synthase family. The cofactor is [4Fe-4S] cluster.

It is found in the cytoplasm. It catalyses the reaction [[Fe-S] cluster scaffold protein carrying a second [4Fe-4S](2+) cluster] + N(6)-octanoyl-L-lysyl-[protein] + 2 oxidized [2Fe-2S]-[ferredoxin] + 2 S-adenosyl-L-methionine + 4 H(+) = [[Fe-S] cluster scaffold protein] + N(6)-[(R)-dihydrolipoyl]-L-lysyl-[protein] + 4 Fe(3+) + 2 hydrogen sulfide + 2 5'-deoxyadenosine + 2 L-methionine + 2 reduced [2Fe-2S]-[ferredoxin]. It participates in protein modification; protein lipoylation via endogenous pathway; protein N(6)-(lipoyl)lysine from octanoyl-[acyl-carrier-protein]: step 2/2. Functionally, catalyzes the radical-mediated insertion of two sulfur atoms into the C-6 and C-8 positions of the octanoyl moiety bound to the lipoyl domains of lipoate-dependent enzymes, thereby converting the octanoylated domains into lipoylated derivatives. This chain is Lipoyl synthase, found in Nitrobacter winogradskyi (strain ATCC 25391 / DSM 10237 / CIP 104748 / NCIMB 11846 / Nb-255).